Reading from the N-terminus, the 221-residue chain is Ribosomal RNA small subunit methyltransferase G (221 aa).

S-adenosyl-L-methionine contacts are provided by residues Gly-85, Leu-90, 138 to 139 (AE), and Arg-151.

The protein belongs to the methyltransferase superfamily. RNA methyltransferase RsmG family.

The protein resides in the cytoplasm. It catalyses the reaction guanosine(527) in 16S rRNA + S-adenosyl-L-methionine = N(7)-methylguanosine(527) in 16S rRNA + S-adenosyl-L-homocysteine. Functionally, specifically methylates the N7 position of guanine in position 527 of 16S rRNA. This chain is Ribosomal RNA small subunit methyltransferase G, found in Caulobacter sp. (strain K31).